The sequence spans 215 residues: Cytochrome b6 (215 aa).

A helical membrane pass occupies residues 32 to 52 (IFYCLGGITLTCFIVQVATGF). Cys35 contributes to the heme c binding site. His86 and His100 together coordinate heme b. The next 3 membrane-spanning stretches (helical) occupy residues 90-110 (ASMM…TGGF), 116-136 (LTWV…VTGY), and 186-206 (AHTF…FVMI). Residues His187 and His202 each coordinate heme b.

Belongs to the cytochrome b family. PetB subfamily. As to quaternary structure, the 4 large subunits of the cytochrome b6-f complex are cytochrome b6, subunit IV (17 kDa polypeptide, PetD), cytochrome f and the Rieske protein, while the 4 small subunits are PetG, PetL, PetM and PetN. The complex functions as a dimer. Heme b serves as cofactor. Heme c is required as a cofactor.

Its subcellular location is the plastid. It is found in the chloroplast thylakoid membrane. Its function is as follows. Component of the cytochrome b6-f complex, which mediates electron transfer between photosystem II (PSII) and photosystem I (PSI), cyclic electron flow around PSI, and state transitions. This is Cytochrome b6 from Emiliania huxleyi (Coccolithophore).